The sequence spans 415 residues: DNA double-strand break repair protein Mre11 (415 aa).

Positions 10, 12, 51, and 86 each coordinate Mn(2+). The Proton donor role is filled by His-87. Mn(2+) contacts are provided by His-174, His-208, and His-210.

The protein belongs to the MRE11/RAD32 family. As to quaternary structure, homodimer. Forms a heterotetramer composed of two Mre11 subunits and two Rad50 subunits. Mn(2+) serves as cofactor.

Nuclease activity is regulated by Rad50. In terms of biological role, part of the Rad50/Mre11 complex, which is involved in the early steps of DNA double-strand break (DSB) repair. The complex may facilitate opening of the processed DNA ends to aid in the recruitment of HerA and NurA. Mre11 binds to DSB ends and has both double-stranded 3'-5' exonuclease activity and single-stranded endonuclease activity. The sequence is that of DNA double-strand break repair protein Mre11 from Pyrococcus abyssi (strain GE5 / Orsay).